Here is a 644-residue protein sequence, read N- to C-terminus: ATP-dependent zinc metalloprotease FtsH (644 aa).

Topologically, residues 1-4 (MAKN) are cytoplasmic. A helical membrane pass occupies residues 5–25 (LILWLVIAVVLMSVFQSFGPS). Residues 26-98 (ESNGRKVDYS…VGEPPEEPSL (73 aa)) are Periplasmic-facing. A helical membrane pass occupies residues 99 to 119 (LASIFISWFPMLLLIGVWIFF). The Cytoplasmic portion of the chain corresponds to 120 to 644 (MRQMQGGGGK…NTMSEQLGDK (525 aa)). 192–199 (GPPGTGKT) is a binding site for ATP. Zn(2+) is bound at residue His-414. Glu-415 is a catalytic residue. Residues His-418 and Asp-492 each contribute to the Zn(2+) site. The tract at residues 599 to 644 (RPPAGWEDPNGTNNSDSNGTPQAPRPVDEPRTPNPGNTMSEQLGDK) is disordered. 2 stretches are compositionally biased toward polar residues: residues 608–619 (NGTNNSDSNGTP) and 632–644 (NPGN…LGDK).

In the central section; belongs to the AAA ATPase family. It in the C-terminal section; belongs to the peptidase M41 family. In terms of assembly, homohexamer. Zn(2+) is required as a cofactor.

The protein resides in the cell inner membrane. Functionally, acts as a processive, ATP-dependent zinc metallopeptidase for both cytoplasmic and membrane proteins. Plays a role in the quality control of integral membrane proteins. The sequence is that of ATP-dependent zinc metalloprotease FtsH from Salmonella typhi.